The primary structure comprises 475 residues: Glycogen synthase (475 aa).

Residue Lys-15 coordinates ADP-alpha-D-glucose.

Belongs to the glycosyltransferase 1 family. Bacterial/plant glycogen synthase subfamily.

It catalyses the reaction [(1-&gt;4)-alpha-D-glucosyl](n) + ADP-alpha-D-glucose = [(1-&gt;4)-alpha-D-glucosyl](n+1) + ADP + H(+). It participates in glycan biosynthesis; glycogen biosynthesis. Synthesizes alpha-1,4-glucan chains using ADP-glucose. This is Glycogen synthase from Alkaliphilus metalliredigens (strain QYMF).